We begin with the raw amino-acid sequence, 146 residues long: Mitochondrial import receptor subunit TOM20 homolog B (146 aa).

Over 1-5 (MMGGS) the chain is Mitochondrial intermembrane. Residues 6–25 (SSRIAAGLGAALFVGYCIYF) form a helical membrane-spanning segment. Topologically, residues 26–146 (DRKRRSDPNY…AQSISDDDIE (121 aa)) are cytoplasmic. Over residues 37–47 (NKLRERRKKQK) the composition is skewed to basic residues. Positions 37–56 (NKLRERRKKQKAAQEKAGLS) are disordered. Serine 141 is subject to Phosphoserine.

This sequence belongs to the Tom20 family. Forms part of the preprotein translocase complex of the outer mitochondrial membrane (TOM complex). Interacts with tom22.

Its subcellular location is the mitochondrion outer membrane. Functionally, central component of the receptor complex responsible for the recognition and translocation of cytosolically synthesized mitochondrial preproteins. Together with tom22 functions as the transit peptide receptor at the surface of the mitochondrion outer membrane and facilitates the movement of preproteins into the tom40 translocation pore. This is Mitochondrial import receptor subunit TOM20 homolog B (tomm20b) from Danio rerio (Zebrafish).